The sequence spans 394 residues: Flap endonuclease 1 (394 aa).

The interval 1–104 (MGIKQLFSVI…GELAKRFQRK (104 aa)) is N-domain. Asp34 is a Mg(2+) binding site. The DNA site is built by Arg47 and Arg70. Mg(2+)-binding residues include Asp86, Glu158, Glu160, Asp179, and Asp181. Positions 122–253 (DVEKFSRRTV…STALKLIREH (132 aa)) are I-domain. A DNA-binding site is contributed by Glu158. Gly231 and Asp233 together coordinate DNA. Asp233 is a binding site for Mg(2+). The interval 341-349 (QQARIEGFF) is interaction with PCNA. Residues 356–383 (EEEKKAHKRKLEEQAEQKRKKVKEEKKE) show a composition bias toward basic and acidic residues. Residues 356 to 394 (EEEKKAHKRKLEEQAEQKRKKVKEEKKEKAKLKAKPRGA) are disordered. Residues 384-394 (KAKLKAKPRGA) are compositionally biased toward basic residues.

This sequence belongs to the XPG/RAD2 endonuclease family. FEN1 subfamily. As to quaternary structure, interacts with PCNA. Three molecules of dnr-8/fen1 bind to one PCNA trimer with each molecule binding to one PCNA monomer. PCNA stimulates the nuclease activity without altering cleavage specificity. Mg(2+) serves as cofactor. Post-translationally, phosphorylated. Phosphorylation upon DNA damage induces relocalization to the nuclear plasma.

It localises to the nucleus. It is found in the nucleolus. The protein resides in the nucleoplasm. The protein localises to the mitochondrion. Structure-specific nuclease with 5'-flap endonuclease and 5'-3' exonuclease activities involved in DNA replication and repair. During DNA replication, cleaves the 5'-overhanging flap structure that is generated by displacement synthesis when DNA polymerase encounters the 5'-end of a downstream Okazaki fragment. It enters the flap from the 5'-end and then tracks to cleave the flap base, leaving a nick for ligation. Also involved in the long patch base excision repair (LP-BER) pathway, by cleaving within the apurinic/apyrimidinic (AP) site-terminated flap. Acts as a genome stabilization factor that prevents flaps from equilibrating into structures that lead to duplications and deletions. Also possesses 5'-3' exonuclease activity on nicked or gapped double-stranded DNA, and exhibits RNase H activity. Also involved in replication and repair of rDNA and in repairing mitochondrial DNA. This Neurospora crassa (strain ATCC 24698 / 74-OR23-1A / CBS 708.71 / DSM 1257 / FGSC 987) protein is Flap endonuclease 1 (dnr-8).